Consider the following 357-residue polypeptide: Holliday junction branch migration complex subunit RuvB (357 aa).

A large ATPase domain (RuvB-L) region spans residues 3–193; that stretch reads WDDTTDAEAA…FGFTAHMEFY (191 aa). ATP contacts are provided by residues L32, R33, G74, K77, T78, T79, 140-142, R183, Y193, and R230; that span reads EDF. T78 contributes to the Mg(2+) binding site. The segment at 194 to 264 is small ATPAse domain (RuvB-S); that stretch reads GPAELERVIH…IAAAALAVYE (71 aa). The interval 267–357 is head domain (RuvB-H); that stretch reads ARGLDRLDRG…GNGQPDLFGA (91 aa). The DNA site is built by R303, R322, and R327. The tract at residues 337-357 is disordered; that stretch reads LGLTPPRPQSSGNGQPDLFGA.

Belongs to the RuvB family. Homohexamer. Forms an RuvA(8)-RuvB(12)-Holliday junction (HJ) complex. HJ DNA is sandwiched between 2 RuvA tetramers; dsDNA enters through RuvA and exits via RuvB. An RuvB hexamer assembles on each DNA strand where it exits the tetramer. Each RuvB hexamer is contacted by two RuvA subunits (via domain III) on 2 adjacent RuvB subunits; this complex drives branch migration. In the full resolvosome a probable DNA-RuvA(4)-RuvB(12)-RuvC(2) complex forms which resolves the HJ.

It is found in the cytoplasm. The enzyme catalyses ATP + H2O = ADP + phosphate + H(+). The RuvA-RuvB-RuvC complex processes Holliday junction (HJ) DNA during genetic recombination and DNA repair, while the RuvA-RuvB complex plays an important role in the rescue of blocked DNA replication forks via replication fork reversal (RFR). RuvA specifically binds to HJ cruciform DNA, conferring on it an open structure. The RuvB hexamer acts as an ATP-dependent pump, pulling dsDNA into and through the RuvAB complex. RuvB forms 2 homohexamers on either side of HJ DNA bound by 1 or 2 RuvA tetramers; 4 subunits per hexamer contact DNA at a time. Coordinated motions by a converter formed by DNA-disengaged RuvB subunits stimulates ATP hydrolysis and nucleotide exchange. Immobilization of the converter enables RuvB to convert the ATP-contained energy into a lever motion, pulling 2 nucleotides of DNA out of the RuvA tetramer per ATP hydrolyzed, thus driving DNA branch migration. The RuvB motors rotate together with the DNA substrate, which together with the progressing nucleotide cycle form the mechanistic basis for DNA recombination by continuous HJ branch migration. Branch migration allows RuvC to scan DNA until it finds its consensus sequence, where it cleaves and resolves cruciform DNA. This is Holliday junction branch migration complex subunit RuvB from Streptomyces coelicolor (strain ATCC BAA-471 / A3(2) / M145).